Here is a 136-residue protein sequence, read N- to C-terminus: Glutaredoxin-C7 (136 aa).

In terms of domain architecture, Glutaredoxin spans 29–135 (LLRIESLASE…PLLKDAGALW (107 aa)). Cysteine 49 and cysteine 52 are oxidised to a cystine. The Responsive for interaction with TGA factors signature appears at 133-136 (ALWL).

Belongs to the glutaredoxin family. CC-type subfamily. Interacts with TGA2, TGA3, TGA7 and PAN. Interacts with TGA9 and TGA10 in the nucleus. As to expression, highly expressed in inflorescences, roots, and siliques. Expressed at lower levels in mature flowers.

The protein localises to the cytoplasm. It localises to the nucleus. Its function is as follows. Has a glutathione-disulfide oxidoreductase activity in the presence of NADPH and glutathione reductase. Reduces low molecular weight disulfides and proteins. Involved in flower development as a regulator of petal primorida initiation and further petal morphogenesis. May mediate post-translational modifications of target proteins required for normal petal organ initiation and morphogenesis. ROXY1/TGA protein interactions can occur in vivo and support their biological relevance in petal development. May be involved in the regulation of the floral regulator class C gene AG (AGAMOUS). The sequence is that of Glutaredoxin-C7 (GRXC7) from Arabidopsis thaliana (Mouse-ear cress).